A 288-amino-acid polypeptide reads, in one-letter code: ATP synthase gamma chain (288 aa).

This sequence belongs to the ATPase gamma chain family. In terms of assembly, F-type ATPases have 2 components, CF(1) - the catalytic core - and CF(0) - the membrane proton channel. CF(1) has five subunits: alpha(3), beta(3), gamma(1), delta(1), epsilon(1). CF(0) has three main subunits: a, b and c.

It localises to the cell inner membrane. In terms of biological role, produces ATP from ADP in the presence of a proton gradient across the membrane. The gamma chain is believed to be important in regulating ATPase activity and the flow of protons through the CF(0) complex. This is ATP synthase gamma chain from Aliivibrio salmonicida (strain LFI1238) (Vibrio salmonicida (strain LFI1238)).